Here is a 198-residue protein sequence, read N- to C-terminus: Recombination protein RecR (198 aa).

A C4-type zinc finger spans residues C57–C72. The Toprim domain maps to T80–P175.

It belongs to the RecR family.

In terms of biological role, may play a role in DNA repair. It seems to be involved in an RecBC-independent recombinational process of DNA repair. It may act with RecF and RecO. The polypeptide is Recombination protein RecR (Burkholderia ambifaria (strain MC40-6)).